Reading from the N-terminus, the 354-residue chain is MASYTLAELAARVGGQVDGDGKLRLEGIAPLEEATAAEISFFSNRKYRKAFEASRAGAVVVEPGEKVPAGRPVLRVVNAYLAFAKISTLFHPPREAMPEVAPTAVIHPTARVHPSAQVMPLACVGPDAQVGARTILFPGVHVADGARVGEDCVLYHNVVVRERCAVGNRVILQPGCVVGSDGFGFAFDPDGEGKGPRHYKVPQVGNVVIEDDVEVGANTCVDRATLGSTRIGRGAKIDNLVQIAHNVQVGPLSLLVSQVGVAGSTKLGMGVVAGGQAGIVGHLEIGDGVRIGAQSGVMADVEAGETVSGSPAVPHGNWLKAMASLDHLHDMRKELRELRREVERLRADAGEDEP.

H245 acts as the Proton acceptor in catalysis.

It belongs to the transferase hexapeptide repeat family. LpxD subfamily. As to quaternary structure, homotrimer.

The catalysed reaction is a UDP-3-O-[(3R)-3-hydroxyacyl]-alpha-D-glucosamine + a (3R)-hydroxyacyl-[ACP] = a UDP-2-N,3-O-bis[(3R)-3-hydroxyacyl]-alpha-D-glucosamine + holo-[ACP] + H(+). The protein operates within bacterial outer membrane biogenesis; LPS lipid A biosynthesis. Catalyzes the N-acylation of UDP-3-O-acylglucosamine using 3-hydroxyacyl-ACP as the acyl donor. Is involved in the biosynthesis of lipid A, a phosphorylated glycolipid that anchors the lipopolysaccharide to the outer membrane of the cell. The sequence is that of UDP-3-O-acylglucosamine N-acyltransferase from Anaeromyxobacter dehalogenans (strain 2CP-C).